A 3459-amino-acid polypeptide reads, in one-letter code: uncharacterized protein (3459 aa).

Residues 158–167 are compositionally biased toward acidic residues; that stretch reads NDDDWIFNED. Disordered regions lie at residues 158–230 and 400–447; these read NDDD…NNNN and YGYI…NDEK. Basic and acidic residues predominate over residues 168–184; the sequence is DEKKNKNNDGNDNRYDY. Over residues 185 to 201 the composition is skewed to low complexity; it reads NDLQNNNNNDNNKYDYN. Residues 204–221 are compositionally biased toward basic and acidic residues; the sequence is DDEKKNKNNDGDDNKYDY. Positions 406–443 are enriched in acidic residues; the sequence is DNDDGDDYNDDNDNDDNYNDDNYNDDNYNDDNYNDDNY. A coiled-coil region spans residues 771-851; the sequence is VNEKKKGENE…NEMNKDEENE (81 aa). A helical membrane pass occupies residues 1059–1079; that stretch reads LIYMIYLFFTYKKYDLLLMFI. Disordered stretches follow at residues 1148–1187, 1399–1467, and 1711–1733; these read RRQE…NDYD, IPTQ…NDDD, and QKKK…NKEN. The span at 1404 to 1463 shows a compositional bias: basic and acidic residues; it reads DKNETDEGNKNETDEGDKNETDEGDKNETDEGNKNETEEIYKNETDEGNKNETEEIYKND. 2 helical membrane-spanning segments follow: residues 2059–2079 and 2197–2217; these read FLLF…IFFF and IIQC…DFLF. 2 disordered regions span residues 2582–2644 and 2776–2835; these read IYKD…DNNN and GRIW…DKGD. Positions 2592–2629 are enriched in acidic residues; the sequence is DNNDDDNINDDDNINDDDNINDDDNNNDDDNNNDDNND. The segment covering 2779-2821 has biased composition (basic and acidic residues); the sequence is WKREENGEKKKNEKNESEKNERNEKNEKNEKHEKHEKHEKNEK. Positions 2785–2820 form a coiled coil; sequence GEKKKNEKNESEKNERNEKNEKNEKHEKHEKHEKNE. 2 helical membrane-spanning segments follow: residues 3229 to 3249 and 3296 to 3316; these read LFII…SFIL and LLFF…NINS.

Its subcellular location is the membrane. This is an uncharacterized protein from Plasmodium falciparum (isolate 3D7).